Here is a 459-residue protein sequence, read N- to C-terminus: Fibrinogen C domain-containing protein 1 (459 aa).

The segment at 1 to 22 is disordered; it reads MVHERWKTVGSASQLEDRPRDK. The Cytoplasmic portion of the chain corresponds to 1 to 33; sequence MVHERWKTVGSASQLEDRPRDKPQRASCSYVLC. A helical; Signal-anchor for type II membrane protein membrane pass occupies residues 34–54; it reads TVLLSLAVLLAVAVTGVVLFL. Residues 55–459 lie on the Extracellular side of the membrane; sequence NHTHTPGTAP…MKIRPVREDR (405 aa). Positions 233 to 456 constitute a Fibrinogen C-terminal domain; that stretch reads CANGSRPRDC…FSEMKIRPVR (224 aa). A disulfide bridge connects residues C242 and C271. An N-linked (GlcNAc...) asparagine glycan is attached at N338. Residues D391 and D393 each coordinate Ca(2+). C399 and C412 form a disulfide bridge.

As to quaternary structure, homotetramer; disulfide-linked.

The protein localises to the membrane. Acetyl group-binding receptor which shows a high-affinity and calcium-dependent binding to acetylated structures such as chitin, some N-acetylated carbohydrates, and amino acids, but not to their non-acetylated counterparts. Can facilitate the endocytosis of acetylated components. The chain is Fibrinogen C domain-containing protein 1 (Fibcd1) from Mus musculus (Mouse).